The primary structure comprises 303 residues: Sodium/potassium-transporting ATPase subunit beta-1 (303 aa).

The Cytoplasmic segment spans residues 1-34 (MPAATKDSDGGWKKFLWNSEKKEFLGRTGGSWAK). The chain crosses the membrane as a helical; Signal-anchor for type II membrane protein span at residues 35–55 (ILLFYVIFYGCLAGIFIGTIQ). The Extracellular segment spans residues 56–303 (ALLLTINDFK…FDVKFTINES (248 aa)). Asparagine 113 carries N-linked (GlcNAc...) asparagine glycosylation. 2 disulfides stabilise this stretch: cysteine 126–cysteine 149 and cysteine 159–cysteine 175. Asparagine 194 and asparagine 264 each carry an N-linked (GlcNAc...) asparagine glycan. Cysteine 214 and cysteine 275 are disulfide-bonded.

Belongs to the X(+)/potassium ATPases subunit beta family. As to quaternary structure, the sodium/potassium-transporting ATPase is composed of a catalytic alpha subunit, an auxiliary non-catalytic beta subunit and an additional regulatory subunit. Detected in all tissues except liver and cardiac muscle. Highest levels found in intestine, ovary and kidney with marginally lower levels in brain, spleen, esophagus, eye and pancreas, intermediate levels in gill and low levels in white and red skeletal muscle.

It localises to the cell membrane. Its function is as follows. This is the non-catalytic component of the active enzyme, which catalyzes the hydrolysis of ATP coupled with the exchange of Na(+) and K(+) ions across the plasma membrane. The beta subunit regulates, through assembly of alpha/beta heterodimers, the number of sodium pumps transported to the plasma membrane. The sequence is that of Sodium/potassium-transporting ATPase subunit beta-1 (atp1b1) from Anguilla anguilla (European freshwater eel).